Reading from the N-terminus, the 371-residue chain is Probable G protein-coupled receptor 85 (371 aa).

The Extracellular segment spans residues 1–26 (MANYSHAGDHNILQNVSPLATFLKLT). Asparagine 3 carries an N-linked (GlcNAc...) asparagine glycan. The helical transmembrane segment at 27–47 (SLGFIIGVGVVGNLLISILLV) threads the bilayer. Over 48–58 (KDKSLHRAPYY) the chain is Cytoplasmic. The chain crosses the membrane as a helical span at residues 59-79 (FLLDLCASDILRSAICFPFVF). At 80-96 (TSVKNGSAWTYGTLTCK) the chain is on the extracellular side. The N-linked (GlcNAc...) asparagine glycan is linked to asparagine 84. Residues cysteine 95 and cysteine 173 are joined by a disulfide bond. Residues 97-117 (VIAFLGVLSCFHTAFMLFCVS) form a helical membrane-spanning segment. The Cytoplasmic segment spans residues 118–138 (VTRYLAIAHHRFYTKRLTFWT). A helical membrane pass occupies residues 139 to 159 (CLAVICMVWTLSVAMAFPPVL). At 160–189 (DVGTYSFIREEDQCTFQHRSFRANDSLGFM) the chain is on the extracellular side. N-linked (GlcNAc...) asparagine glycosylation occurs at asparagine 183. The chain crosses the membrane as a helical span at residues 190 to 210 (LLLALILLATQLVYLKLIFFV). At 211–287 (HDRRKMKPVQ…FKTEKRISRM (77 aa)) the chain is on the cytoplasmic side. A helical membrane pass occupies residues 288-308 (FYIITFFFLSLWGPYLVACYW). Residues 309-321 (RVFARGPVIPGGY) lie on the Extracellular side of the membrane. Residues 322–342 (LTAAVWMSFAQAGVNPFICIF) traverse the membrane as a helical segment. At 343–371 (SNRELRRCFSTTLLYCRKSRLPREPYCVI) the chain is on the cytoplasmic side.

This sequence belongs to the G-protein coupled receptor 1 family.

The protein resides in the cell membrane. Its function is as follows. Orphan receptor. This Danio rerio (Zebrafish) protein is Probable G protein-coupled receptor 85 (gpr85).